The primary structure comprises 246 residues: tRNA pseudouridine synthase A (246 aa).

The Nucleophile role is filled by Asp-53. Tyr-111 lines the substrate pocket.

Belongs to the tRNA pseudouridine synthase TruA family. Homodimer.

It catalyses the reaction uridine(38/39/40) in tRNA = pseudouridine(38/39/40) in tRNA. Formation of pseudouridine at positions 38, 39 and 40 in the anticodon stem and loop of transfer RNAs. The sequence is that of tRNA pseudouridine synthase A from Anoxybacillus flavithermus (strain DSM 21510 / WK1).